A 506-amino-acid chain; its full sequence is MTKYARPGTADAIMSFQSRYDNWIGNEWVAPVKGQYFENPTPVTGQNFCDVARSTAEDIELALDAAHAAAPAWGKTSVAERAIILNKIADRMEENLESIALAESWDNGKPIRETLNADIPLAIDHFRYFAGAIRAQEGSLSEINSDTVAYHFHEPLGVVGQIIPWNFPILMAVWKLAPALAAGNAIVLKPAEQTPVSILHLIGIIGDLLPAGVLNIVNGFGVEAGKPLASSPRIKKIAFTGETTTGRLIMQYASQNLIPVTLELGGKSPNVFFSDVLASNDDYQDKALEGFTMFALNQGEVCTAPSRALIQEDIFDEFLAMAAIRTKAVRQGDPLDTDTMIGAQASNDQLEKILSYIEIGKAEGAKVITGGERAELGGDLSGGYYVQPTVFTGNNKMRIFQEIFGPVVSVTSFKDYDEAIEIANDTLYGLGAGVWSRDGGVAYRAGRDIQAGRVWTNTYHQYPAHAAFGGYKQSGIGRENHLMMLSHYQQTKNLLVSYAQKAQGFF.

219–225 (GFGVEAG) is a binding site for NAD(+). Active-site residues include E263 and C302.

This sequence belongs to the aldehyde dehydrogenase family.

It catalyses the reaction an aldehyde + NAD(+) + H2O = a carboxylate + NADH + 2 H(+). Its function is as follows. Degrades all aldehydes potentially generated by N dealkylation of thiocarbamates and may also participate in ethanolamine metabolism and further assimilation of degradation products by thiocarbamate-induced cytochrome P-450. The chain is EPTC-inducible aldehyde dehydrogenase (thcA) from Rhodococcus erythropolis (Arthrobacter picolinophilus).